The sequence spans 422 residues: Glutamyl-tRNA reductase (422 aa).

Substrate is bound by residues 48-51, S100, 105-107, and Q111; these read TCNR and EDQ. C49 (nucleophile) is an active-site residue. Residue 180-185 coordinates NADP(+); the sequence is GTGEMG.

This sequence belongs to the glutamyl-tRNA reductase family. In terms of assembly, homodimer.

It catalyses the reaction (S)-4-amino-5-oxopentanoate + tRNA(Glu) + NADP(+) = L-glutamyl-tRNA(Glu) + NADPH + H(+). The protein operates within porphyrin-containing compound metabolism; protoporphyrin-IX biosynthesis; 5-aminolevulinate from L-glutamyl-tRNA(Glu): step 1/2. In terms of biological role, catalyzes the NADPH-dependent reduction of glutamyl-tRNA(Glu) to glutamate 1-semialdehyde (GSA). The sequence is that of Glutamyl-tRNA reductase from Methanococcoides burtonii (strain DSM 6242 / NBRC 107633 / OCM 468 / ACE-M).